The following is a 371-amino-acid chain: Cytochrome b (371 aa).

4 consecutive transmembrane segments (helical) span residues 25-45, 69-90, 105-125, and 170-190; these read FGSM…FLAV, WMMQ…YIHI, WMSG…GYVL, and FFAL…LHVI. Residues His75 and His89 each coordinate heme b. Heme b contacts are provided by His174 and His188. His193 provides a ligand contact to a ubiquinone. The next 4 helical transmembrane spans lie at 218-238, 280-300, 312-332, and 339-358; these read YKDF…VSFF, LGGA…PFTH, LYQL…WAAT, and FITI…ISIP.

It belongs to the cytochrome b family. In terms of assembly, the cytochrome bc1 complex contains 3 respiratory subunits (MT-CYB, CYC1 and UQCRFS1), 2 core proteins (UQCRC1 and UQCRC2) and probably 6 low-molecular weight proteins. The cofactor is heme b.

It localises to the mitochondrion inner membrane. In terms of biological role, component of the ubiquinol-cytochrome c reductase complex (complex III or cytochrome b-c1 complex) that is part of the mitochondrial respiratory chain. The b-c1 complex mediates electron transfer from ubiquinol to cytochrome c. Contributes to the generation of a proton gradient across the mitochondrial membrane that is then used for ATP synthesis. The polypeptide is Cytochrome b (MT-CYB) (Malayopython reticulatus (Reticulate python)).